The chain runs to 320 residues: 3-O-acetylpapaveroxine carboxylesterase CXE1 (320 aa).

An Involved in the stabilization of the negatively charged intermediate by the formation of the oxyanion hole motif is present at residues 72–74 (HGG). Active-site residues include serine 158, aspartate 262, and histidine 292.

It belongs to the 'GDXG' lipolytic enzyme family.

The catalysed reaction is 3-O-acetylpapaveroxine + H2O = narcotine hemiacetal + acetate + H(+). Its pathway is alkaloid biosynthesis. In terms of biological role, carboxylesterase involved in the biosynthesis of the benzylisoquinoline alkaloid noscapine. Converts 3-O-acetylpapaveroxine to papaveroxine which spontaneously rearranges to narcotine hemiacetal. This is 3-O-acetylpapaveroxine carboxylesterase CXE1 from Papaver somniferum (Opium poppy).